We begin with the raw amino-acid sequence, 338 residues long: Lipoate-protein ligase A (338 aa).

Residues 29 to 216 form the BPL/LPL catalytic domain; it reads PATQRVLFLW…AFFAHYGERI (188 aa). ATP-binding positions include Arg71, 76–79, and Lys134; that span reads GAVF. Lys134 contacts (R)-lipoate.

The protein belongs to the LplA family. As to quaternary structure, monomer.

It localises to the cytoplasm. The enzyme catalyses L-lysyl-[lipoyl-carrier protein] + (R)-lipoate + ATP = N(6)-[(R)-lipoyl]-L-lysyl-[lipoyl-carrier protein] + AMP + diphosphate + H(+). It functions in the pathway protein modification; protein lipoylation via exogenous pathway; protein N(6)-(lipoyl)lysine from lipoate: step 1/2. The protein operates within protein modification; protein lipoylation via exogenous pathway; protein N(6)-(lipoyl)lysine from lipoate: step 2/2. Catalyzes both the ATP-dependent activation of exogenously supplied lipoate to lipoyl-AMP and the transfer of the activated lipoyl onto the lipoyl domains of lipoate-dependent enzymes. This is Lipoate-protein ligase A from Salmonella typhi.